The following is a 263-amino-acid chain: Aminoglycoside (3'') (9) adenylyltransferase (263 aa).

It carries out the reaction streptomycin + ATP = 3''-O-adenylylstreptomycin + diphosphate. The catalysed reaction is spectinomycin + ATP = 9-O-adenylylspectinomycin + diphosphate. Mediates bacterial resistance to the antibiotics streptomycin and spectinomycin. In Escherichia coli, this protein is Aminoglycoside (3'') (9) adenylyltransferase.